The sequence spans 357 residues: Golgi to ER traffic protein 2 (357 aa).

Topologically, residues 1–224 (MSETTDKQLT…AKYHTYQEQL (224 aa)) are cytoplasmic. Residues 65–81 (TDTATVTDSSTNATSVS) show a composition bias toward low complexity. Positions 65–99 (TDTATVTDSSTNATSVSPSAAKATPTSTGVSSAIS) are disordered. The segment covering 88–98 (TPTSTGVSSAI) has biased composition (polar residues). The chain crosses the membrane as a helical span at residues 225-245 (WQFRFLVVRILATIFNFAYHF). The Lumenal segment spans residues 246–270 (ITIPSFTASNHAYVRDLSEVYPLLG). Residues 271-290 (FMTIFTSIEVVIIATYYLLF) form a helical membrane-spanning segment. Residues 291-334 (TKLGLFHASNQKSFILKGISTLSMFVPQLLRYEPLVATFLGYKE) are Cytoplasmic-facing. A helical membrane pass occupies residues 335 to 355 (LLGIFVGDLSLVVVMFGLLSF). The Lumenal segment spans residues 356–357 (SN).

Belongs to the GET2 family. Component of the Golgi to ER traffic (GET) complex, which is composed of GET1, GET2 and GET3. Within the complex, GET1 and GET2 form a heterotetramer which is stabilized by phosphatidylinositol binding and which binds to the GET3 homodimer.

Its subcellular location is the endoplasmic reticulum membrane. It localises to the golgi apparatus membrane. Its function is as follows. Required for the post-translational delivery of tail-anchored (TA) proteins to the endoplasmic reticulum. Together with GET1, acts as a membrane receptor for soluble GET3, which recognizes and selectively binds the transmembrane domain of TA proteins in the cytosol. The GET complex cooperates with the HDEL receptor ERD2 to mediate the ATP-dependent retrieval of resident ER proteins that contain a C-terminal H-D-E-L retention signal from the Golgi to the ER. In Lodderomyces elongisporus (strain ATCC 11503 / CBS 2605 / JCM 1781 / NBRC 1676 / NRRL YB-4239) (Yeast), this protein is Golgi to ER traffic protein 2.